Consider the following 485-residue polypeptide: Glutamyl-tRNA(Gln) amidotransferase subunit A (485 aa).

Catalysis depends on charge relay system residues lysine 74 and serine 149. Serine 173 serves as the catalytic Acyl-ester intermediate.

This sequence belongs to the amidase family. GatA subfamily. Heterotrimer of A, B and C subunits.

It carries out the reaction L-glutamyl-tRNA(Gln) + L-glutamine + ATP + H2O = L-glutaminyl-tRNA(Gln) + L-glutamate + ADP + phosphate + H(+). Functionally, allows the formation of correctly charged Gln-tRNA(Gln) through the transamidation of misacylated Glu-tRNA(Gln) in organisms which lack glutaminyl-tRNA synthetase. The reaction takes place in the presence of glutamine and ATP through an activated gamma-phospho-Glu-tRNA(Gln). The protein is Glutamyl-tRNA(Gln) amidotransferase subunit A of Janthinobacterium sp. (strain Marseille) (Minibacterium massiliensis).